We begin with the raw amino-acid sequence, 298 residues long: Nucleoid occlusion protein (298 aa).

A DNA-binding region (H-T-H motif) is located at residues 152-171; that stretch reads EALAQRLGKGQSTVANKLRL.

It belongs to the ParB family.

Its subcellular location is the cytoplasm. The protein resides in the nucleoid. Its function is as follows. Effects nucleoid occlusion by binding relatively nonspecifically to DNA and preventing the assembly of the division machinery in the vicinity of the nucleoid, especially under conditions that disturb the cell cycle. It helps to coordinate cell division and chromosome segregation by preventing the formation of the Z ring through the nucleoid, which would cause chromosome breakage. This chain is Nucleoid occlusion protein, found in Lysinibacillus sphaericus (strain C3-41).